The primary structure comprises 198 residues: Autophagy-related protein 33 (198 aa).

3 helical membrane-spanning segments follow: residues valine 17 to leucine 37, proline 60 to proline 80, and proline 86 to proline 106. The segment at alanine 111–aspartate 147 is disordered. The segment covering proline 112–arginine 121 has biased composition (low complexity). Positions alanine 126–proline 142 are enriched in basic and acidic residues. Residues threonine 171–proline 191 traverse the membrane as a helical segment.

Belongs to the ATG33 family.

The protein resides in the mitochondrion membrane. Its function is as follows. Involved in the selective degradation of mitochondria via autophagy during starvation and at post-log phase. Autophagy is required for proper vegetative growth, asexual/sexual reproduction, and full virulence. Autophagy is particularly involved in the biosynthesis of deoxynivalenol (DON), an important virulence determinant. In Gibberella zeae (strain ATCC MYA-4620 / CBS 123657 / FGSC 9075 / NRRL 31084 / PH-1) (Wheat head blight fungus), this protein is Autophagy-related protein 33.